Reading from the N-terminus, the 259-residue chain is Imidazole glycerol phosphate synthase subunit HisF (259 aa).

Active-site residues include Asp11 and Asp130.

This sequence belongs to the HisA/HisF family. Heterodimer of HisH and HisF.

It is found in the cytoplasm. It carries out the reaction 5-[(5-phospho-1-deoxy-D-ribulos-1-ylimino)methylamino]-1-(5-phospho-beta-D-ribosyl)imidazole-4-carboxamide + L-glutamine = D-erythro-1-(imidazol-4-yl)glycerol 3-phosphate + 5-amino-1-(5-phospho-beta-D-ribosyl)imidazole-4-carboxamide + L-glutamate + H(+). The protein operates within amino-acid biosynthesis; L-histidine biosynthesis; L-histidine from 5-phospho-alpha-D-ribose 1-diphosphate: step 5/9. Its function is as follows. IGPS catalyzes the conversion of PRFAR and glutamine to IGP, AICAR and glutamate. The HisF subunit catalyzes the cyclization activity that produces IGP and AICAR from PRFAR using the ammonia provided by the HisH subunit. This is Imidazole glycerol phosphate synthase subunit HisF from Desulfovibrio desulfuricans (strain ATCC 27774 / DSM 6949 / MB).